The primary structure comprises 552 residues: CTP synthase (552 aa).

The tract at residues 1-270 (MTKFVFVTGG…DGLICDKLRL (270 aa)) is amidoligase domain. Ser13 is a binding site for CTP. Ser13 contributes to the UTP binding site. ATP is bound by residues 14–19 (SLGKGI) and Asp71. Mg(2+)-binding residues include Asp71 and Glu144. CTP is bound by residues 151-153 (DIE), 191-196 (KTKPTQ), and Lys227. UTP is bound by residues 191-196 (KTKPTQ) and Lys227. One can recognise a Glutamine amidotransferase type-1 domain in the interval 295–548 (QIAMVGKYVE…IKAAVEHQKP (254 aa)). Residue Gly357 participates in L-glutamine binding. The Nucleophile; for glutamine hydrolysis role is filled by Cys384. L-glutamine contacts are provided by residues 385 to 388 (LGMQ), Glu408, and Arg474. Residues His521 and Glu523 contribute to the active site.

Belongs to the CTP synthase family. Homotetramer.

It carries out the reaction UTP + L-glutamine + ATP + H2O = CTP + L-glutamate + ADP + phosphate + 2 H(+). The catalysed reaction is L-glutamine + H2O = L-glutamate + NH4(+). The enzyme catalyses UTP + NH4(+) + ATP = CTP + ADP + phosphate + 2 H(+). The protein operates within pyrimidine metabolism; CTP biosynthesis via de novo pathway; CTP from UDP: step 2/2. With respect to regulation, allosterically activated by GTP, when glutamine is the substrate; GTP has no effect on the reaction when ammonia is the substrate. The allosteric effector GTP functions by stabilizing the protein conformation that binds the tetrahedral intermediate(s) formed during glutamine hydrolysis. Inhibited by the product CTP, via allosteric rather than competitive inhibition. Catalyzes the ATP-dependent amination of UTP to CTP with either L-glutamine or ammonia as the source of nitrogen. Regulates intracellular CTP levels through interactions with the four ribonucleotide triphosphates. The chain is CTP synthase from Acidovorax ebreus (strain TPSY) (Diaphorobacter sp. (strain TPSY)).